The sequence spans 427 residues: Glutamyl-tRNA reductase (427 aa).

Residues 49–52, Ser-101, 106–108, and Gln-112 contribute to the substrate site; these read TCNR and EPQ. Cys-50 functions as the Nucleophile in the catalytic mechanism. 181–186 is an NADP(+) binding site; it reads GAGETI. Positions 407–427 are disordered; the sequence is FPATPGYRHPPVRPDDADPAP. A compositionally biased stretch (basic and acidic residues) spans 418-427; the sequence is VRPDDADPAP.

The protein belongs to the glutamyl-tRNA reductase family. Homodimer.

The enzyme catalyses (S)-4-amino-5-oxopentanoate + tRNA(Glu) + NADP(+) = L-glutamyl-tRNA(Glu) + NADPH + H(+). It functions in the pathway porphyrin-containing compound metabolism; protoporphyrin-IX biosynthesis; 5-aminolevulinate from L-glutamyl-tRNA(Glu): step 1/2. In terms of biological role, catalyzes the NADPH-dependent reduction of glutamyl-tRNA(Glu) to glutamate 1-semialdehyde (GSA). This is Glutamyl-tRNA reductase from Stenotrophomonas maltophilia (strain R551-3).